The following is a 76-amino-acid chain: Exodeoxyribonuclease 7 small subunit (76 aa).

The protein belongs to the XseB family. As to quaternary structure, heterooligomer composed of large and small subunits.

Its subcellular location is the cytoplasm. The enzyme catalyses Exonucleolytic cleavage in either 5'- to 3'- or 3'- to 5'-direction to yield nucleoside 5'-phosphates.. Functionally, bidirectionally degrades single-stranded DNA into large acid-insoluble oligonucleotides, which are then degraded further into small acid-soluble oligonucleotides. The sequence is that of Exodeoxyribonuclease 7 small subunit from Bacillus cereus (strain G9842).